Consider the following 419-residue polypeptide: Cysteine desulfurase (419 aa).

Pyridoxal 5'-phosphate-binding positions include 69–70 (AT), Asn157, Gln185, and 205–207 (SAH). Lys208 bears the N6-(pyridoxal phosphate)lysine mark. Thr245 serves as a coordination point for pyridoxal 5'-phosphate. Catalysis depends on Cys333, which acts as the Cysteine persulfide intermediate. A [2Fe-2S] cluster-binding site is contributed by Cys333. Positions 392–419 (TPIQDEVRDDNRASSNSLNRGSAASKES) are disordered. Residues 404 to 413 (ASSNSLNRGS) are compositionally biased toward polar residues.

Belongs to the class-V pyridoxal-phosphate-dependent aminotransferase family. NifS/IscS subfamily. As to quaternary structure, homodimer. Requires pyridoxal 5'-phosphate as cofactor.

The enzyme catalyses (sulfur carrier)-H + L-cysteine = (sulfur carrier)-SH + L-alanine. Functionally, catalyzes the removal of elemental sulfur atoms from cysteine to produce alanine. Seems to participate in the biosynthesis of the nitrogenase metalloclusters by providing the inorganic sulfur required for the Fe-S core formation. This Frankia sp. (strain EuIK1) protein is Cysteine desulfurase.